The sequence spans 767 residues: Two-component response regulator-like PRR73 (767 aa).

The interval 1–64 is disordered; sequence MGSACEAGTD…EPQQTDEQKE (64 aa). The Response regulatory domain maps to 82 to 200; sequence RVLLVENDDS…ELKNLWQHVW (119 aa). A compositionally biased stretch (low complexity) spans 205–214; that stretch reads SSSGSGSESG. Disordered regions lie at residues 205–272, 312–388, 476–546, 646–701, and 727–767; these read SSSG…QSSW, RWLP…NEPT, ASNQ…RGKV, ANYS…SGSG, and NFGK…DEDR. Over residues 238–252 the composition is skewed to acidic residues; the sequence is DNEDDDDNDEDDDDL. Composition is skewed to polar residues over residues 263–272, 343–361, and 488–497; these read DNGSGTQSSW, RNSS…VNPT, and CSPQDNSSEA. The segment covering 518–531 has biased composition (low complexity); the sequence is GSNGSSNNNDMGSS. Positions 532–543 are enriched in polar residues; it reads TKNAITKPSSNR. Residues 689–700 are compositionally biased toward gly residues; sequence GAGGGNGSGSGS. The CCT domain occupies 712-754; sequence REAALNKFRQKRKVRNFGKKVRYQSRKRLAEQRPRIRGQFVRQ. The segment covering 727 to 738 has biased composition (basic residues); that stretch reads NFGKKVRYQSRK.

Belongs to the ARR-like family.

The protein localises to the nucleus. Controls photoperiodic flowering response. Seems to be one of the component of the circadian clock. Expression of several members of the ARR-like family is controlled by circadian rhythm. The particular coordinated sequential expression of PRR73, PRR37, PRR95, PRR59 and PPR1 result to circadian waves that may be at the basis of the endogenous circadian clock. In Oryza sativa subsp. indica (Rice), this protein is Two-component response regulator-like PRR73 (PRR73).